Consider the following 398-residue polypeptide: Phosphoglycerate kinase (398 aa).

Substrate-binding positions include 23-25 (DLN), Arg-38, 61-64 (HFGR), Arg-119, and Arg-152. ATP-binding positions include Lys-202, Glu-324, and 354-357 (GGDT).

The protein belongs to the phosphoglycerate kinase family. In terms of assembly, monomer.

It is found in the cytoplasm. It catalyses the reaction (2R)-3-phosphoglycerate + ATP = (2R)-3-phospho-glyceroyl phosphate + ADP. It participates in carbohydrate degradation; glycolysis; pyruvate from D-glyceraldehyde 3-phosphate: step 2/5. This chain is Phosphoglycerate kinase, found in Bradyrhizobium diazoefficiens (strain JCM 10833 / BCRC 13528 / IAM 13628 / NBRC 14792 / USDA 110).